The following is a 423-amino-acid chain: Pre-mRNA-splicing regulator WTAP (423 aa).

The disordered stretch occupies residues 234–423 (QQLSQMNQTQ…TSNASAGSVL (190 aa)). Composition is skewed to polar residues over residues 239-276 (MNQTQGTSSGAGPSRTSPSTASEPSTQSEPANASSSNV), 285-301 (NGPSNGNSSQRGASGSS), 358-377 (DSPTGSETSVTQHSNDTDSN), and 392-404 (TAGTRHSTQNGLD). Residues 405–423 (SSAAAVATNTSNASAGSVL) show a composition bias toward low complexity.

Belongs to the fl(2)d family. Component of the WMM complex, a N6-methyltransferase complex composed of a catalytic subcomplex, named MAC, and of an associated subcomplex, named MACOM. Component of the MACOM subcomplex.

The protein localises to the nucleus speckle. It localises to the nucleus. Its subcellular location is the nucleoplasm. Its function is as follows. Associated component of the WMM complex, a complex that mediates N6-methyladenosine (m6A) methylation of RNAs, a modification that plays a role in the efficiency of mRNA splicing and RNA processing. The polypeptide is Pre-mRNA-splicing regulator WTAP (Danio rerio (Zebrafish)).